The chain runs to 384 residues: tRNA 2-selenouridine synthase (384 aa).

A Rhodanese domain is found at 15–138 (FVAGKPLIDL…MRQYLIGVIE (124 aa)). The active-site S-selanylcysteine intermediate is C98.

This sequence belongs to the SelU family. In terms of assembly, monomer.

The enzyme catalyses 5-methylaminomethyl-2-thiouridine(34) in tRNA + selenophosphate + (2E)-geranyl diphosphate + H2O + H(+) = 5-methylaminomethyl-2-selenouridine(34) in tRNA + (2E)-thiogeraniol + phosphate + diphosphate. It carries out the reaction 5-methylaminomethyl-2-thiouridine(34) in tRNA + (2E)-geranyl diphosphate = 5-methylaminomethyl-S-(2E)-geranyl-thiouridine(34) in tRNA + diphosphate. The catalysed reaction is 5-methylaminomethyl-S-(2E)-geranyl-thiouridine(34) in tRNA + selenophosphate + H(+) = 5-methylaminomethyl-2-(Se-phospho)selenouridine(34) in tRNA + (2E)-thiogeraniol. It catalyses the reaction 5-methylaminomethyl-2-(Se-phospho)selenouridine(34) in tRNA + H2O = 5-methylaminomethyl-2-selenouridine(34) in tRNA + phosphate. In terms of biological role, involved in the post-transcriptional modification of the uridine at the wobble position (U34) of tRNA(Lys), tRNA(Glu) and tRNA(Gln). Catalyzes the conversion of 2-thiouridine (S2U-RNA) to 2-selenouridine (Se2U-RNA). Acts in a two-step process involving geranylation of 2-thiouridine (S2U) to S-geranyl-2-thiouridine (geS2U) and subsequent selenation of the latter derivative to 2-selenouridine (Se2U) in the tRNA chain. In Shewanella sp. (strain MR-4), this protein is tRNA 2-selenouridine synthase.